The primary structure comprises 394 residues: Phosphoglycerate kinase (394 aa).

Substrate contacts are provided by residues 21–23 (DFN), arginine 36, 59–62 (HMGR), arginine 118, and arginine 151. ATP is bound by residues lysine 202, glutamate 324, and 350–353 (GGDS).

The protein belongs to the phosphoglycerate kinase family. Monomer.

It localises to the cytoplasm. The enzyme catalyses (2R)-3-phosphoglycerate + ATP = (2R)-3-phospho-glyceroyl phosphate + ADP. It functions in the pathway carbohydrate degradation; glycolysis; pyruvate from D-glyceraldehyde 3-phosphate: step 2/5. The protein is Phosphoglycerate kinase of Exiguobacterium sibiricum (strain DSM 17290 / CCUG 55495 / CIP 109462 / JCM 13490 / 255-15).